The primary structure comprises 491 residues: Cytochrome P450 monooxygenase olcB (491 aa).

A helical membrane pass occupies residues 5-27 (LLLSLSVCLLYVFITAFWNLYIH). Position 435 (C435) interacts with heme.

The protein belongs to the cytochrome P450 family. Requires heme as cofactor.

It localises to the membrane. The protein operates within secondary metabolite biosynthesis; terpenoid biosynthesis. Its function is as follows. Cytochrome P450 monooxygenase; part of the gene cluster that mediates the biosynthesis of 15-deoxyoxalicine B. The first step of the pathway is the synthesis of nicotinyl-CoA from nicotinic acid by the nicotinic acid-CoA ligase olcI. Nicotinyl-CoA is then a substrate of polyketide synthase olcA to produce 4-hydroxy-6-(3-pyridinyl)-2H-pyran-2-one (HPPO) which is further prenylated by the polyprenyl transferase olcH to yield geranylgeranyl-HPPO. Geranylgeranyl pyrophosphate is provided by the cluster-specific geranylgeranyl pyrophosphate synthase olcC. The FAD-dependent monooxygenase olcE catalyzes the epoxidation of geranylgeranyl-HPPO and the terpene cyclase olcD catalyzes the cyclization of the terpenoid component, resulting in the formation of the tricyclic terpene moiety seen in predecaturin E. The cytochrome P450 monooxygenase then catalyzes the allylic oxidation of predecaturin E, which is followed by spirocylization with concomitant loss of one molecule of water to form decaturin E. Decaturin E is the substrate of the cytochrome P450 monooxygenase olcJ which hydroxylates it at the C-29 position to form decaturin F. The short-chain dehydrogenase/reductase olcF may catalyze the oxidation of decaturin F to generate the 29-hydroxyl-27-one intermediate, and subsequent hemiacetal formation probably leads to the formation of decaturin C. The dioxygenase olcK may be a peroxisomal enzyme that catalyzes the hydroxylation of decaturin C into decaturin A once decaturin C is shuttled into the peroxisome by the MFS transporter olcL. Finally the cytochrome P450 monooxygenase olcB catalyzes the oxidative rearrangement to yield 15-deoxyoxalicine B. In the absence of olcJ, decaturin E may be shunted to a pathway in which it is oxidized to a ketone, possibly by olcF, to form decaturin D, which undergoes further allylic oxidation to yield decaturin G. Moreover, in the absence of oclK or oclL, oclB can convert decaturin C into 15-deoxyoxalicine A. The protein is Cytochrome P450 monooxygenase olcB of Penicillium canescens.